The following is a 213-amino-acid chain: Large ribosomal subunit protein uL3 (213 aa).

It belongs to the universal ribosomal protein uL3 family. In terms of assembly, part of the 50S ribosomal subunit. Forms a cluster with proteins L14 and L19.

In terms of biological role, one of the primary rRNA binding proteins, it binds directly near the 3'-end of the 23S rRNA, where it nucleates assembly of the 50S subunit. The sequence is that of Large ribosomal subunit protein uL3 from Petrotoga mobilis (strain DSM 10674 / SJ95).